The sequence spans 209 residues: PRA1 family protein A3 (209 aa).

4 consecutive transmembrane segments (helical) span residues 51-72, 76-98, 143-163, and 164-184; these read LYYY…ALIT, AILG…AATF, LVFV…SCGL, and LWVL…ASLR.

The protein belongs to the PRA1 family.

Its subcellular location is the endosome membrane. Functionally, may be involved in both secretory and endocytic intracellular trafficking in the endosomal/prevacuolar compartments. This chain is PRA1 family protein A3 (PRA1A3), found in Arabidopsis thaliana (Mouse-ear cress).